Reading from the N-terminus, the 142-residue chain is Putative transcriptional regulatory protein Mevan_1098 (142 aa).

The protein belongs to the Tfx family.

Functionally, putative transcriptional regulator. This is Putative transcriptional regulatory protein Mevan_1098 from Methanococcus vannielii (strain ATCC 35089 / DSM 1224 / JCM 13029 / OCM 148 / SB).